The chain runs to 20 residues: Expansin-B (20 aa).

The disordered stretch occupies residues 1-20 (GPPKVAPGKXISASFGGEWL).

The protein belongs to the expansin family. Expansin B subfamily.

It is found in the secreted. It localises to the cell wall. The protein localises to the membrane. In terms of biological role, may aid fertilization by loosening the cell wall of the stigma and style, thereby facilitating penetration of the pollen tube. Acts selectively on grass cell walls, which are relatively poor in pectins and xyloglucans and rich in glucuronoarabinoxylans and (1-3),(1-4)-beta-D-glucans, when compared with cell walls of other angiosperms, including other monocots. This chain is Expansin-B, found in Paspalum notatum (Bahia grass).